Reading from the N-terminus, the 597-residue chain is Elongation factor 4 (597 aa).

The tr-type G domain occupies 2-184; the sequence is KHIRNFSIIA…TIVKSIPAPE (183 aa). GTP-binding positions include 14-19 and 131-134; these read DHGKST and NKID.

The protein belongs to the TRAFAC class translation factor GTPase superfamily. Classic translation factor GTPase family. LepA subfamily.

It is found in the cell inner membrane. The catalysed reaction is GTP + H2O = GDP + phosphate + H(+). Required for accurate and efficient protein synthesis under certain stress conditions. May act as a fidelity factor of the translation reaction, by catalyzing a one-codon backward translocation of tRNAs on improperly translocated ribosomes. Back-translocation proceeds from a post-translocation (POST) complex to a pre-translocation (PRE) complex, thus giving elongation factor G a second chance to translocate the tRNAs correctly. Binds to ribosomes in a GTP-dependent manner. The chain is Elongation factor 4 from Aliivibrio fischeri (strain ATCC 700601 / ES114) (Vibrio fischeri).